We begin with the raw amino-acid sequence, 65 residues long: Large ribosomal subunit protein bL35 (65 aa).

It belongs to the bacterial ribosomal protein bL35 family.

The chain is Large ribosomal subunit protein bL35 from Heliobacterium modesticaldum (strain ATCC 51547 / Ice1).